A 29-amino-acid polypeptide reads, in one-letter code: uncharacterized protein (29 aa).

This is an uncharacterized protein from Haloarcula hispanica (His1V).